The chain runs to 419 residues: Gamma-glutamyl phosphate reductase (419 aa).

Belongs to the gamma-glutamyl phosphate reductase family.

The protein resides in the cytoplasm. The catalysed reaction is L-glutamate 5-semialdehyde + phosphate + NADP(+) = L-glutamyl 5-phosphate + NADPH + H(+). Its pathway is amino-acid biosynthesis; L-proline biosynthesis; L-glutamate 5-semialdehyde from L-glutamate: step 2/2. In terms of biological role, catalyzes the NADPH-dependent reduction of L-glutamate 5-phosphate into L-glutamate 5-semialdehyde and phosphate. The product spontaneously undergoes cyclization to form 1-pyrroline-5-carboxylate. This Yersinia pseudotuberculosis serotype O:1b (strain IP 31758) protein is Gamma-glutamyl phosphate reductase.